Consider the following 90-residue polypeptide: Small ribosomal subunit protein bS18 (90 aa).

The disordered stretch occupies residues 1-24; that stretch reads MKPMRQKPGRGQGNKSISNALASK.

The protein belongs to the bacterial ribosomal protein bS18 family. In terms of assembly, part of the 30S ribosomal subunit. Forms a tight heterodimer with protein bS6.

Its function is as follows. Binds as a heterodimer with protein bS6 to the central domain of the 16S rRNA, where it helps stabilize the platform of the 30S subunit. This Chlorobium phaeovibrioides (strain DSM 265 / 1930) (Prosthecochloris vibrioformis (strain DSM 265)) protein is Small ribosomal subunit protein bS18.